The following is a 330-amino-acid chain: tRNA dimethylallyltransferase (330 aa).

The segment covering 1–11 (MDYSHSDSPST) has biased composition (polar residues). The disordered stretch occupies residues 1-21 (MDYSHSDSPSTAPAGKTPVDQ). 29–36 (GPTGAGKS) lines the ATP pocket. 31-36 (TGAGKS) contributes to the substrate binding site. Residues 56–59 (DSMQ) form an interaction with substrate tRNA region.

This sequence belongs to the IPP transferase family. As to quaternary structure, monomer. Requires Mg(2+) as cofactor.

It catalyses the reaction adenosine(37) in tRNA + dimethylallyl diphosphate = N(6)-dimethylallyladenosine(37) in tRNA + diphosphate. Functionally, catalyzes the transfer of a dimethylallyl group onto the adenine at position 37 in tRNAs that read codons beginning with uridine, leading to the formation of N6-(dimethylallyl)adenosine (i(6)A). This is tRNA dimethylallyltransferase from Corynebacterium urealyticum (strain ATCC 43042 / DSM 7109).